Here is a 109-residue protein sequence, read N- to C-terminus: Aquaporin-2 (109 aa).

Residues Ser-1–Arg-6 are Cytoplasmic-facing. Residues Ala-7 to Leu-27 form a helical membrane-spanning segment. Residues Ser-28–Ser-35 are Extracellular-facing. A helical transmembrane segment spans residues Val-36–Leu-54. Topologically, residues Gly-55 to Gly-59 are cytoplasmic. An intramembrane region (discontinuously helical) is located at residues Ala-60 to Ala-69. An NPA 1 motif is present at residues Asn-63–Ala-65. The Cytoplasmic portion of the chain corresponds to Cys-70–Arg-80. The helical transmembrane segment at Ala-81 to Ile-102 threads the bilayer. Topologically, residues Thr-103–Gly-109 are extracellular.

It belongs to the MIP/aquaporin (TC 1.A.8) family. Homotetramer. In terms of processing, serine phosphorylation is necessary and sufficient for expression at the apical membrane. Endocytosis is not phosphorylation-dependent. N-glycosylated.

It localises to the apical cell membrane. It is found in the basolateral cell membrane. Its subcellular location is the cell membrane. The protein localises to the cytoplasmic vesicle membrane. The protein resides in the golgi apparatus. It localises to the trans-Golgi network membrane. It carries out the reaction H2O(in) = H2O(out). The catalysed reaction is glycerol(in) = glycerol(out). Forms a water-specific channel that provides the plasma membranes of renal collecting duct with high permeability to water, thereby permitting water to move in the direction of an osmotic gradient. Plays an essential role in renal water homeostasis. Could also be permeable to glycerol. The sequence is that of Aquaporin-2 from Dasypus novemcinctus (Nine-banded armadillo).